The chain runs to 31 residues: Photosystem II reaction center protein T (31 aa).

The chain crosses the membrane as a helical span at residues 3 to 23; the sequence is AFSYVLILTLALVTLFFAVAF.

Belongs to the PsbT family. PSII is composed of 1 copy each of membrane proteins PsbA, PsbB, PsbC, PsbD, PsbE, PsbF, PsbH, PsbI, PsbJ, PsbK, PsbL, PsbM, PsbT, PsbX, PsbY, Psb30/Ycf12, peripheral proteins PsbO, CyanoQ (PsbQ), PsbU, PsbV and a large number of cofactors. It forms dimeric complexes.

Its subcellular location is the cellular thylakoid membrane. Its function is as follows. Found at the monomer-monomer interface of the photosystem II (PS II) dimer, plays a role in assembly and dimerization of PSII. PSII is a light-driven water plastoquinone oxidoreductase, using light energy to abstract electrons from H(2)O, generating a proton gradient subsequently used for ATP formation. This Prochlorococcus marinus (strain NATL2A) protein is Photosystem II reaction center protein T.